The primary structure comprises 264 residues: Thymidylate synthase (264 aa).

Arginine 21 serves as a coordination point for dUMP. Histidine 51 provides a ligand contact to (6R)-5,10-methylene-5,6,7,8-tetrahydrofolate. DUMP is bound at residue 126 to 127 (RR). The Nucleophile role is filled by cysteine 146. DUMP-binding positions include 166-169 (RSAD), asparagine 177, and 207-209 (HLY). Aspartate 169 is a binding site for (6R)-5,10-methylene-5,6,7,8-tetrahydrofolate. Alanine 263 contacts (6R)-5,10-methylene-5,6,7,8-tetrahydrofolate.

Belongs to the thymidylate synthase family. Bacterial-type ThyA subfamily. As to quaternary structure, homodimer.

The protein resides in the cytoplasm. It catalyses the reaction dUMP + (6R)-5,10-methylene-5,6,7,8-tetrahydrofolate = 7,8-dihydrofolate + dTMP. The protein operates within pyrimidine metabolism; dTTP biosynthesis. Functionally, catalyzes the reductive methylation of 2'-deoxyuridine-5'-monophosphate (dUMP) to 2'-deoxythymidine-5'-monophosphate (dTMP) while utilizing 5,10-methylenetetrahydrofolate (mTHF) as the methyl donor and reductant in the reaction, yielding dihydrofolate (DHF) as a by-product. This enzymatic reaction provides an intracellular de novo source of dTMP, an essential precursor for DNA biosynthesis. The protein is Thymidylate synthase of Paramagnetospirillum magneticum (strain ATCC 700264 / AMB-1) (Magnetospirillum magneticum).